The following is a 117-amino-acid chain: Aspartate 1-decarboxylase (117 aa).

Ser-25 functions as the Schiff-base intermediate with substrate; via pyruvic acid in the catalytic mechanism. Ser-25 carries the post-translational modification Pyruvic acid (Ser). Thr-57 serves as a coordination point for substrate. Tyr-58 serves as the catalytic Proton donor. 72–74 (GAA) lines the substrate pocket.

The protein belongs to the PanD family. Heterooctamer of four alpha and four beta subunits. It depends on pyruvate as a cofactor. Is synthesized initially as an inactive proenzyme, which is activated by self-cleavage at a specific serine bond to produce a beta-subunit with a hydroxyl group at its C-terminus and an alpha-subunit with a pyruvoyl group at its N-terminus.

Its subcellular location is the cytoplasm. The catalysed reaction is L-aspartate + H(+) = beta-alanine + CO2. The protein operates within cofactor biosynthesis; (R)-pantothenate biosynthesis; beta-alanine from L-aspartate: step 1/1. Catalyzes the pyruvoyl-dependent decarboxylation of aspartate to produce beta-alanine. This chain is Aspartate 1-decarboxylase, found in Helicobacter pylori (strain ATCC 700392 / 26695) (Campylobacter pylori).